A 217-amino-acid polypeptide reads, in one-letter code: ATP phosphoribosyltransferase (217 aa).

Belongs to the ATP phosphoribosyltransferase family. Short subfamily. As to quaternary structure, heteromultimer composed of HisG and HisZ subunits.

The protein localises to the cytoplasm. The enzyme catalyses 1-(5-phospho-beta-D-ribosyl)-ATP + diphosphate = 5-phospho-alpha-D-ribose 1-diphosphate + ATP. The protein operates within amino-acid biosynthesis; L-histidine biosynthesis; L-histidine from 5-phospho-alpha-D-ribose 1-diphosphate: step 1/9. Functionally, catalyzes the condensation of ATP and 5-phosphoribose 1-diphosphate to form N'-(5'-phosphoribosyl)-ATP (PR-ATP). Has a crucial role in the pathway because the rate of histidine biosynthesis seems to be controlled primarily by regulation of HisG enzymatic activity. This chain is ATP phosphoribosyltransferase, found in Burkholderia lata (strain ATCC 17760 / DSM 23089 / LMG 22485 / NCIMB 9086 / R18194 / 383).